An 869-amino-acid chain; its full sequence is NACHT, LRR and PYD domains-containing protein 6 (869 aa).

The region spanning 37–128 (KLRDAPLDGR…REHVLRQHAK (92 aa)) is the Pyrin domain. Residues 194–511 (LTVVLQGPAG…EFLAALSYLL (318 aa)) form the NACHT domain. 200 to 207 (GPAGIGKT) lines the ATP pocket. The interval 350-354 (KDKKK) is disordered. The stretch at 460–485 (EEDLEKLKLRGSQVQTIFLNKKEIPG) is one LRR 1 repeat. The segment at 577-608 (VQGQSHPKGPPVGAKKTAELEDIEDAEEEEEE) is disordered. Acidic residues predominate over residues 596 to 608 (LEDIEDAEEEEEE). LRR repeat units follow at residues 635-658 (LSSLPEIVLERVRLTRMDLEVLNY) and 837-860 (TLSLTSVELSENSLRDLQAVKTSK).

It belongs to the NLRP family. Homomultimer; forms the NLRP6 inflammasome polymeric complex, a filament composed of homopolymers in response to pathogens and other damage-associated signals. The core of NLRP6 inflammasomes consists of a signal sensor component (NLRP6), an adapter (PYCARD/ASC), which recruits effector pro-inflammatory caspases (CASP1 and CASP4). Interacts (via pyrin domain) with PYCARD/ASC (via pyrin domain); interaction takes place following NLRP6 activation and formation of liquid-liquid phase separation (LLPS), initiating nucleation which greatly enhances further addition of soluble PYCARD/ASC molecules to the speck in a prion-like polymerization process. Clustered PYCARD/ASC nucleates the formation of CASP1 (or possibly CASP4) filaments through the interaction of their respective CARD domains, acting as a platform for CASP1 polymerization. CASP1 filament formation increases local enzyme concentration, resulting in trans-autocleavage and activation. Active CASP1 then processes IL1B and IL18 precursors, leading to the release of mature cytokines in the extracellular milieu and inflammatory response. Interacts with DHX15. In terms of processing, polyubiquitinated with 'Lys-63'-linked chains, promoting the interaction with PYCARD/ASC and formation of the NLRP6 inflammasome. Deubiquitination by CYLD decreases the interaction with PYCARD/ASC. In terms of tissue distribution, highly expressed in the gastrointestinal tract, predominantly in colonic myofibroblasts and in colonic epithelial and endothelial cells. Within the intestinal mucosa, highly expressed by goblet cells. Also expressed in hepatocytes and in immune cells, including CD4(+) and CD8(+) T-cells, dendritic cells, mastocytes and peritoneal macrophages, as well as in lung, kidney, bladder and gonads.

It is found in the cytoplasm. The protein localises to the inflammasome. Its subcellular location is the cell membrane. The protein resides in the nucleus membrane. Functionally, acts as the sensor component of the NLRP6 inflammasome, which mediates inflammasome activation in response to various pathogen-associated signals, leading to maturation and secretion of IL1B and IL18. Inflammasomes are supramolecular complexes that assemble in the cytosol in response to pathogens and other damage-associated signals and play critical roles in innate immunity and inflammation. Acts as a recognition receptor (PRR): recognizes and binds specific pathogens and other damage-associated signals, such as lipoteichoic acid (LTA), a cell-wall component of Gram-positive bacteria, or double stranded RNA (dsRNA). May also recognize and bind lipopolysaccharide (LPS), a major component of the outer membrane of Gram-negative bacteria; however, LPS is probably not a major activator of the NLRP6 inflammasome. Following LTA- or dsRNA-binding, NLRP6 undergoes liquid-liquid phase separation (LLPS), enhancing multivalent interactions, an essential step for the formation of the NLRP6 inflammasome polymeric complex. The NLRP6 inflammasome acts by promoting recruitment of effector pro-inflammatory caspases (CASP1 and/or CASP4) that catalyze maturation and secretion of IL1B and IL18 in the extracellular milieu. The NLRP6 inflammasome plays a central role in the maintenance of epithelial integrity and host defense against microbial infections in the intestine. Required to restrict infection against Gram-positive bacteria by recognizing lipoteichoic acid (LTA), leading to recruitment of CASP4 and CASP1, and subsequent maturation and secretion of IL1B and IL18. Involved in intestinal antiviral innate immunity together with DHX15: recognizes and binds viral dsRNA to restrict infection by enteric viruses through the interferon pathway and GSDMD-dependent release of IL18. Required to prevent infection by the apicomplexan parasite C.tyzzeri in enterocytes by promoting GSDMD-dependent release of IL18. The NLRP6 inflammasome may also regulate the gut microbiota composition by acting as a sensor of microbiota-associated metabolites to form a PYCARD/ASC-dependent inflammasome for downstream IL18 release and secretion of antimicrobial peptides. Its role in the regulation of the gut microbiota composition is however subject to discussion. Essential for gut mucosal self-renewal and proliferation. Regulate mucus secretion in an inflammasome- and autophagy-dependent manner to prevent invasion by enteric bacteria. During systemic bacterial infections, the NLRP6 inflammasome negatively regulates neutrophil recruitment and neutrophil extracellular traps (NETs) formation. May promote peripheral nerve recovery following injury via an inflammasome-independent mechanism. This Mus musculus (Mouse) protein is NACHT, LRR and PYD domains-containing protein 6.